The following is a 111-amino-acid chain: Large ribosomal subunit protein eL33x (111 aa).

The protein belongs to the eukaryotic ribosomal protein eL33 family.

The chain is Large ribosomal subunit protein eL33x (RPL35AD) from Arabidopsis thaliana (Mouse-ear cress).